We begin with the raw amino-acid sequence, 493 residues long: Leucine-rich repeat-containing protein 14 (493 aa).

An LRR 1; degenerate repeat occupies 111 to 146 (KHALRVLDMTGLLDDGVEQDPETMSMWDCTAAVART). An LRR 2; degenerate repeat occupies 194–218 (RLCCRDLRAEDLPMRNTVALLQLLD). An LRR 3; degenerate repeat occupies 219–246 (AGCLRRIDLRFNNLGLRGLSVIIPHVAR). Residues 247–282 (FQHLASLRLHYVHGDSRQPSVDGEDNFRYFLAQMGR) form an LRR 4; degenerate repeat. 5 LRR repeats span residues 283–307 (FMCL…LSTL), 308–339 (QRPL…AHLK), 340–360 (KLDL…QGLL), 364–391 (ATTL…TLTR), and 392–416 (CASL…LLRD).

Belongs to the PRAME family. LRRC14 subfamily. Interacts with IKBKB; disrupts IKBKB-IKBKG interaction preventing I-kappa-B-kinase (IKK) core complex formation and leading to a decrease of IKBKB phosphorylation and NF-kappaB activation. Interacts with CHUK.

The protein localises to the cytoplasm. In terms of biological role, negatively regulates Toll-like receptor-mediated NF-kappa-B signaling by disrupting IKK core complex formation through interaction with IKBKB. This Mus musculus (Mouse) protein is Leucine-rich repeat-containing protein 14.